A 746-amino-acid chain; its full sequence is Ferrienterobactin receptor (746 aa).

Residues Met-1–Ala-22 form the signal peptide. A TonB box motif is present at residues Asp-34 to Ala-41. The 128-residue stretch at Glu-42–Lys-169 folds into the TBDR plug domain. Residues Gly-76–Ile-96 are disordered. Polar residues predominate over residues Leu-79–Gln-93. The region spanning Glu-174–Phe-746 is the TBDR beta-barrel domain. A TonB C-terminal box motif is present at residues Tyr-729–Phe-746.

This sequence belongs to the TonB-dependent receptor family.

It localises to the cell outer membrane. Its function is as follows. This protein is involved in the initial step of iron uptake by binding ferrienterobactin (Fe-ENT), an iron chelatin siderophore that allows E.coli to extract iron from the environment. FepA also acts as a receptor for colicins B and D. The protein is Ferrienterobactin receptor (fepA) of Escherichia coli (strain K12).